We begin with the raw amino-acid sequence, 32 residues long: Protein YthB (32 aa).

The protein is Protein YthB of Escherichia coli (strain K12).